We begin with the raw amino-acid sequence, 557 residues long: Low affinity inorganic phosphate transporter 8 (557 aa).

Topologically, residues 1–20 (MATSHGVLRSLDNAKTQSYH) are cytoplasmic. The chain crosses the membrane as a helical span at residues 21-41 (YLAIVIAGMGFFTDAYDLFCI). At 42-70 (TAVTKLIGRLYYSDPTNHSPGILPTNVNN) the chain is on the extracellular side. Residues 71-91 (AITGVALCGTLAGQLFFGWLG) form a helical membrane-spanning segment. The Cytoplasmic segment spans residues 92 to 98 (DKLGRKK). A helical membrane pass occupies residues 99 to 119 (VYGITLTTMVGFALLSGLSFG). The Extracellular segment spans residues 120-130 (STPKTVVTSLC). Residues 131–151 (FFRFWLGFGIGGDYPLSAVIM) traverse the membrane as a helical segment. Over 152–162 (SEYANQKTRGS) the chain is Cytoplasmic. A helical membrane pass occupies residues 163-183 (FIAAVFAMQGVGILVAGGVAM). The Extracellular portion of the chain corresponds to 184–210 (FVSKLFLLYFPAPDFETDAVLSTQPEG). Residues 211–231 (DFVWRIVLMFGAVPAALTYYW) form a helical membrane-spanning segment. Residues 232 to 294 (RMKMPETARY…LFSSEFLNRH (63 aa)) lie on the Cytoplasmic side of the membrane. Residues 295–315 (GLHLLGTTSTWFLLDIAFYSL) form a helical membrane-spanning segment. Residues 316–346 (QLTQKDIYPTSGLVYKASKMNAIEEVFQLSR) lie on the Extracellular side of the membrane. Residues 347–367 (AMFAVALIATVPGYWCTVFLI) form a helical membrane-spanning segment. At 368 to 369 (EK) the chain is on the cytoplasmic side. A helical transmembrane segment spans residues 370-390 (IGRFRIQLIGFLVMSVCMWFL). Topologically, residues 391–414 (GHNYRSFRGEESACKNGSKYSFCN) are extracellular. An N-linked (GlcNAc...) asparagine glycan is attached at Asn-406. The chain crosses the membrane as a helical span at residues 415–435 (GNPVMFAILFGLTLFFANFGP). Residues 436 to 457 (NSTTFIVPAELFPARLRSTCHG) are Cytoplasmic-facing. The helical transmembrane segment at 458-478 (ISAAAGKSGAIVGAFGVQSYI) threads the bilayer. Residues 479–490 (GNSHDKSKGTKQ) are Extracellular-facing. A helical membrane pass occupies residues 491–511 (AIMALAVVNLLGFFFTFLVPE). Residues 512–557 (TQGRSLEEISGEEKDFQGNNADEEISGERNGTRNASVDKSPETSMV) are Cytoplasmic-facing. The tract at residues 519 to 557 (EISGEEKDFQGNNADEEISGERNGTRNASVDKSPETSMV) is disordered. Residues 543–557 (TRNASVDKSPETSMV) show a composition bias toward polar residues.

Belongs to the major facilitator superfamily. Phosphate:H(+) symporter (TC 2.A.1.9) family.

The protein resides in the cell membrane. It carries out the reaction phosphate(in) + H(+)(in) = phosphate(out) + H(+)(out). Low-affinity transporter for external inorganic phosphate (Pi) that may be involved in the acquisition of phosphate released by arbuscular mycorrhizal (AM) fungi (e.g. Glomus versiforme and G.intraradices) during AM symbiosis; not required for mycorrhizal arbuscule development. This chain is Low affinity inorganic phosphate transporter 8, found in Medicago truncatula (Barrel medic).